The primary structure comprises 683 residues: Synaptic vesicle glycoprotein 2B (683 aa).

Residues 1 to 42 (MDDYKYQDNYGGYAPSDGYYRGNESNPEEDAQSDVTEGHDEE) form a disordered region. Residues 1–108 (MDDYKYQDNY…MDECGHGRFQ (108 aa)) lie on the Cytoplasmic side of the membrane. Residue Ser-33 is modified to Phosphoserine. Thr-36 carries the post-translational modification Phosphothreonine. Residues 109–129 (WILFFVLGLALMADGVEVFVV) traverse the membrane as a helical segment. Over 130–148 (SFALPSAEKDMCLSSSKKG) the chain is Extracellular. The chain crosses the membrane as a helical span at residues 149 to 169 (MLGMIVYLGMMAGAFILGGLA). Topologically, residues 170-182 (DKLGRKRVLSMSL) are cytoplasmic. The helical transmembrane segment at 183-203 (AVNASFASLSSFVQGYGAFLF) threads the bilayer. Residues 204 to 205 (CR) are Extracellular-facing. The helical transmembrane segment at 206–226 (LISGIGIGGALPIVFAYFSEF) threads the bilayer. Residues 227–237 (LSREKRGEHLS) are Cytoplasmic-facing. Residues 238-258 (WLGIFWMTGGLYASAMAWSII) form a helical membrane-spanning segment. The Extracellular portion of the chain corresponds to 259 to 277 (PHYGWGFSMGTNYHFHSWR). Residues 278–298 (VFVIVCALPCTVSMVALKFMP) form a helical membrane-spanning segment. Topologically, residues 299–390 (ESPRFLLEMG…CVMGPYRMNT (92 aa)) are cytoplasmic. Residues 391–411 (LILAVVWFAMAFSYYGLTVWF) form a helical membrane-spanning segment. The Extracellular portion of the chain corresponds to 412 to 535 (PDMIRYFQDE…CHMDLEQDND (124 aa)). The residue at position 423 (Tyr-423) is a Phosphotyrosine. N-linked (GlcNAc...) asparagine glycosylation is found at Asn-441, Asn-491, and Asn-516. A helical membrane pass occupies residues 536-556 (FLIYLVSFLGSLSVLPGNIIS). Residues 557–565 (ALLMDRIGR) are Cytoplasmic-facing. A helical membrane pass occupies residues 566-586 (LKMIGGSMLISAVCCFFLFFG). At 587 to 592 (NSESAM) the chain is on the extracellular side. The chain crosses the membrane as a helical span at residues 593–613 (IGWQCLFCGTSIAAWNALDVI). Over 614–626 (TVELYPTNQRATA) the chain is Cytoplasmic. The helical transmembrane segment at 627–649 (FGILNGLCKFGAILGNTIFASFV) threads the bilayer. Residues 650 to 653 (GITK) lie on the Extracellular side of the membrane. Residues 654-672 (VVPILLAAASLVGGGLIAL) traverse the membrane as a helical segment. The Cytoplasmic portion of the chain corresponds to 673–683 (RLPETREQVLM).

Belongs to the major facilitator superfamily. In terms of assembly, interacts with SYT1 in a calcium-independent manner. Forms a complex with SYT1, syntaxin-1 and SNAP25. As to quaternary structure, (Microbial infection) Interacts with C.botulinum neurotoxin type A2 (BoNT/A, botA). Interaction is improved by glycosylation of SV2. N-glycosylated. In terms of processing, the N-terminal cytoplasmic domain is phosphorylated by CK1.

The protein localises to the cytoplasmic vesicle. It localises to the secretory vesicle. Its subcellular location is the synaptic vesicle membrane. It is found in the acrosome. Its function is as follows. Probably plays a role in the control of regulated secretion in neural and endocrine cells. In terms of biological role, (Microbial infection) Receptor for the C.botulinum neurotoxin type A2 (BoNT/A, botA); glycosylation is not essential but enhances the interaction. Probably also serves as a receptor for the closely related C.botulinum neurotoxin type A1. This Homo sapiens (Human) protein is Synaptic vesicle glycoprotein 2B (SV2B).